Reading from the N-terminus, the 431-residue chain is Serine hydroxymethyltransferase 1 (431 aa).

(6S)-5,6,7,8-tetrahydrofolate is bound by residues Leu-127 and 131–133; that span reads GHL. Residue Lys-236 is modified to N6-(pyridoxal phosphate)lysine. Glu-252 is a (6S)-5,6,7,8-tetrahydrofolate binding site.

This sequence belongs to the SHMT family. In terms of assembly, homodimer. The cofactor is pyridoxal 5'-phosphate.

The protein localises to the cytoplasm. The catalysed reaction is (6R)-5,10-methylene-5,6,7,8-tetrahydrofolate + glycine + H2O = (6S)-5,6,7,8-tetrahydrofolate + L-serine. Its pathway is one-carbon metabolism; tetrahydrofolate interconversion. The protein operates within amino-acid biosynthesis; glycine biosynthesis; glycine from L-serine: step 1/1. In terms of biological role, catalyzes the reversible interconversion of serine and glycine with tetrahydrofolate (THF) serving as the one-carbon carrier. This reaction serves as the major source of one-carbon groups required for the biosynthesis of purines, thymidylate, methionine, and other important biomolecules. Also exhibits THF-independent aldolase activity toward beta-hydroxyamino acids, producing glycine and aldehydes, via a retro-aldol mechanism. The protein is Serine hydroxymethyltransferase 1 of Rhizobium meliloti (strain 1021) (Ensifer meliloti).